We begin with the raw amino-acid sequence, 519 residues long: 2-isopropylmalate synthase (519 aa).

The Pyruvate carboxyltransferase domain maps to 5-267 (VKIFDTTLRD…NTNIRSHEIS (263 aa)). 4 residues coordinate Mn(2+): D14, H202, H204, and N238. Positions 392–519 (KLLYLQASSG…KKQQTQTAGV (128 aa)) are regulatory domain.

This sequence belongs to the alpha-IPM synthase/homocitrate synthase family. LeuA type 1 subfamily. In terms of assembly, homodimer. The cofactor is Mn(2+).

The protein resides in the cytoplasm. The catalysed reaction is 3-methyl-2-oxobutanoate + acetyl-CoA + H2O = (2S)-2-isopropylmalate + CoA + H(+). The protein operates within amino-acid biosynthesis; L-leucine biosynthesis; L-leucine from 3-methyl-2-oxobutanoate: step 1/4. Catalyzes the condensation of the acetyl group of acetyl-CoA with 3-methyl-2-oxobutanoate (2-ketoisovalerate) to form 3-carboxy-3-hydroxy-4-methylpentanoate (2-isopropylmalate). In Pseudoalteromonas atlantica (strain T6c / ATCC BAA-1087), this protein is 2-isopropylmalate synthase.